The sequence spans 535 residues: Protein PyrBI (535 aa).

The tract at residues methionine 1–tyrosine 341 is aspartate carbamoyltransferase. Positions lysine 342–lysine 370 are linker. Residues valine 371–asparagine 535 form an aspartate carbamoyltransferase regulatory region region. Positions 488, 493, 517, and 520 each coordinate Zn(2+).

It in the N-terminal section; belongs to the aspartate/ornithine carbamoyltransferase superfamily. ATCase family. The protein in the C-terminal section; belongs to the PyrI family.

The enzyme catalyses carbamoyl phosphate + L-aspartate = N-carbamoyl-L-aspartate + phosphate + H(+). Its pathway is pyrimidine metabolism; UMP biosynthesis via de novo pathway; (S)-dihydroorotate from bicarbonate: step 2/3. This Treponema denticola (strain ATCC 35405 / DSM 14222 / CIP 103919 / JCM 8153 / KCTC 15104) protein is Protein PyrBI (pyrBI).